Here is a 302-residue protein sequence, read N- to C-terminus: Gap junction delta-2 protein (302 aa).

The Cytoplasmic portion of the chain corresponds to 1–19 (MGEWTILERLLEAAVQQHS). Residues 20-42 (TMIGRILLTVVVIFRILVVAIVG) traverse the membrane as a helical segment. Residues 43–75 (ETVYDDEQTMFVCNTLQPGCNQACYDKAFPISH) are Extracellular-facing. The helical transmembrane segment at 76-98 (IRYWVFQIIMVCTPSLCFITYSV) threads the bilayer. At 99-177 (HQSSKQRERQ…KIRRQEGISR (79 aa)) the chain is on the cytoplasmic side. A helical membrane pass occupies residues 178 to 200 (FYIIQVVFRNALEIGFLMGQYFL). The Extracellular segment spans residues 201–232 (YGFKVPSMYECNRYPCVKMVECYVSRPTEKTV). The chain crosses the membrane as a helical span at residues 233–255 (FLVFMFAVSGLCVILNLAELNHL). Topologically, residues 256–302 (GWRKIKTAVRGAQERRKSIYEIRNKDSPHRIGVPNFGRTQSSDSAYV) are cytoplasmic.

Belongs to the connexin family. Delta-type subfamily. A connexon is composed of a hexamer of connexins. As to expression, retinal specific.

It localises to the cell membrane. The protein resides in the cell junction. It is found in the gap junction. In terms of biological role, one gap junction consists of a cluster of closely packed pairs of transmembrane channels, the connexons, through which materials of low MW diffuse from one cell to a neighboring cell. The protein is Gap junction delta-2 protein of Leucoraja erinaceus (Little skate).